The primary structure comprises 185 residues: Protein E3 homolog (185 aa).

The region spanning 7 to 73 (TVNDAEIFSL…SNPPKWFKNY (67 aa)) is the Z-binding domain. Positions 112-179 (NPCIVLNEYC…SKITMDEILD (68 aa)) constitute a DRBM domain.

This sequence belongs to the poxviridae E3 protein family.

In terms of biological role, RNA-binding protein that plays a role in the inhibition of multiple cellular antiviral responses activated by double-stranded RNA (dsRNA), such as inhibition of PKR activation, necroptosis, and IFN-mediated antiviral activities. Recognizes and binds Z-RNA structures via its Z-binding domain and dsRNA via its DRBM domain: RNA-binding activity is required to escape host ZBP1-dependent necroptosis. Mechanistically, the Z-binding domain binds Z-RNAs that are produced during Yaba-like disease virus infection, thereby competing with Z-RNA detection by host ZBP1, suppressing ZBP1-dependent necroptosis. This chain is Protein E3 homolog, found in Yaba-like disease virus (YLDV).